A 152-amino-acid chain; its full sequence is UPF0178 protein Bcer98_3021 (152 aa).

Belongs to the UPF0178 family.

The chain is UPF0178 protein Bcer98_3021 from Bacillus cytotoxicus (strain DSM 22905 / CIP 110041 / 391-98 / NVH 391-98).